The following is a 600-amino-acid chain: Putative fucosyltransferase R654 (600 aa).

It belongs to the glycosyltransferase 10 family.

This chain is Putative fucosyltransferase R654, found in Acanthamoeba polyphaga mimivirus (APMV).